A 360-amino-acid chain; its full sequence is Phenylalanine--tRNA ligase alpha subunit (360 aa).

Position 260 (E260) interacts with Mg(2+).

This sequence belongs to the class-II aminoacyl-tRNA synthetase family. Phe-tRNA synthetase alpha subunit type 1 subfamily. As to quaternary structure, tetramer of two alpha and two beta subunits. Mg(2+) is required as a cofactor.

It localises to the cytoplasm. The enzyme catalyses tRNA(Phe) + L-phenylalanine + ATP = L-phenylalanyl-tRNA(Phe) + AMP + diphosphate + H(+). This Rhizobium rhizogenes (strain K84 / ATCC BAA-868) (Agrobacterium radiobacter) protein is Phenylalanine--tRNA ligase alpha subunit.